The primary structure comprises 41 residues: Alpha-conotoxin TxIB (41 aa).

Residues 1-20 constitute a propeptide that is removed on maturation; it reads FDGRNTSANNKATDLMALPV. Cystine bridges form between Cys-23-Cys-29 and Cys-24-Cys-37. A ser-Xaa-Pro motif, crucial for potent interaction with nAChR region spans residues 25–27; the sequence is SDP. Residue Cys-37 is modified to Cysteine amide; in Alpha-conotoxin TxIB. The propeptide occupies 39–41; sequence GRR.

This sequence belongs to the conotoxin A superfamily. Expressed by the venom duct.

It is found in the secreted. In terms of biological role, alpha-conotoxins act on postsynaptic membranes, they bind to the nicotinic acetylcholine receptors (nAChR) and thus inhibit them. This conotoxin is a subtype-specific blocker of alpha-6/alpha-3-beta-2-beta-3 (CHRNA6/CHRNA3-CHRNB2-CHRNB3) nAChRs nicotinic acetylcholine receptors (nAChRs) (IC(50)=28.4 nM). This Conus textile (Cloth-of-gold cone) protein is Alpha-conotoxin TxIB.